The chain runs to 440 residues: Asparagine--tRNA ligase (440 aa).

The protein belongs to the class-II aminoacyl-tRNA synthetase family. In terms of assembly, homodimer.

The protein resides in the cytoplasm. It carries out the reaction tRNA(Asn) + L-asparagine + ATP = L-asparaginyl-tRNA(Asn) + AMP + diphosphate + H(+). In Roseiflexus sp. (strain RS-1), this protein is Asparagine--tRNA ligase.